Here is a 1147-residue protein sequence, read N- to C-terminus: MEGVRQKCRPKHQVLVLKCYPQYQKGVQVVKPNSSELSYLLYYVSTRRSKLTKVGAFLEKRAARDVWRRKIGNVQVTLQILSALIEKVPRDLPIYARSVMTVLETVVRSQDISMVEDSIETFETFCRHQDMAALSAEQDFATQYREVVRSYAGFAEGDPSTQSKLAAGPPLTVRWKTAGLRAIKGVVSSEAGLAADGGDSIRVILPVILENLYSPEDNLVGSLELKLLEADKNESETAHRRRVSTATVETVDAVEGDASLAAQNTADMDRKAEMDMRLLALRCLEQIVVNGSSRGQIRVTTQVVLDFILRKSRVTGNGLGHNHKDSWATSLIELIAKWCPVQVRFIILVAAMDILHDIPPTEESLDESFAITYLIDRLLKSPVNMIGLSVIDVLLGLLRHMSFLISPSRAGKSTPDEKQNGHSNALELSVKRTEVLSLLQDCIGNLTTHIYYGEQVVDMVRTILTRFRPSRGNEQAITSSPTQSDVLGGASAMISSGEDGLIAFSLPNAKITALRAIKNILLVANTKRPGFTVTTESRHQVGLYVWEGTQWLLSEPDRDVRYAYVDAFLTWLNLETSTDDLKVKERTGRPASQPAKNDLSDPTERPGKRTASMSGNQREKVILIAQSNFLRLLHLTIFDLATDHPTSVSEITLLHLLLVSLVKHLGVNAVRFGLPMVLKLQDNMTTGDGQSFPALVNIGSLVYGYLWALSEKFDLDTSRIGNGIQSEVQKRQQLGVWLETIRLPPVNLDKIIHNSNVQASGRGAQDVSLLIPFDGGEELIQRIEASYGSFITLLTHSPPSSPGSVGSPPRSITAPVLPHVSASAATPKANVLPPAVREQMLSPWSREACLAAAENERAEAKSLSRSRTGTLVMRNHVHQNGTSSPSASSNASVPQSAYASAAGLQNAQRTSVPNSSGSQLISTSRESPVHVNELRRVLSVNEEGKARRMSPLRGRLDGSNRSVISSSSDSMVSGYSLSEFDDGASVKPQSTRGGRISLDGEETPKASALSFMADTNDIPPVPPIPPSISIQGGLTDGRQRSVSASRPSTAPGPRRPSVTNGKAGTPSTSPGRSLSRDKSRSSTGLAAAATDGVEPNAEKIDSARLDVQKLLDGFLSPADAETRGSRRKARSNTGRRGVSGGLGRPPY.

4 disordered regions span residues Lys582–Gly615, Val877–Val929, Glu942–Ala1097, and Phe1114–Tyr1147. Positions Asp598–Gly607 are enriched in basic and acidic residues. Positions Ser883 to Ala897 are enriched in low complexity. The span at Gly903–Glu926 shows a compositional bias: polar residues. Residues Ser959–Ser978 show a composition bias toward low complexity. Over residues Ser1057–Arg1072 the composition is skewed to polar residues. A compositionally biased stretch (gly residues) spans Gly1137–Tyr1147.

It belongs to the EFR3 family.

The polypeptide is Protein efr3 (efr3) (Aspergillus oryzae (strain ATCC 42149 / RIB 40) (Yellow koji mold)).